A 366-amino-acid chain; its full sequence is Protein FAM131A (366 aa).

The disordered stretch occupies residues 342–366 (QRQASDLASSGVVSLDEDEAEPEEQ). The span at 356–366 (LDEDEAEPEEQ) shows a compositional bias: acidic residues.

This sequence belongs to the FAM131 family.

This Homo sapiens (Human) protein is Protein FAM131A (FAM131A).